We begin with the raw amino-acid sequence, 382 residues long: Glutamate 5-kinase (382 aa).

Lysine 15 serves as a coordination point for ATP. Positions 62, 149, and 161 each coordinate substrate. 181-182 (TD) contributes to the ATP binding site. Residues 288-366 (RGSVSVDAGA…VEIERLLGYS (79 aa)) enclose the PUA domain.

The protein belongs to the glutamate 5-kinase family.

It localises to the cytoplasm. It catalyses the reaction L-glutamate + ATP = L-glutamyl 5-phosphate + ADP. It participates in amino-acid biosynthesis; L-proline biosynthesis; L-glutamate 5-semialdehyde from L-glutamate: step 1/2. In terms of biological role, catalyzes the transfer of a phosphate group to glutamate to form L-glutamate 5-phosphate. In Delftia acidovorans (strain DSM 14801 / SPH-1), this protein is Glutamate 5-kinase.